Consider the following 102-residue polypeptide: MSARAFRKFAPLFDRVLVQRFEAETKSKGGIMLPEKAKGKVLEATVVAHGPGVKNEKGEVVPVCVTVGDKVFLPEYGGTKVVLEDTEYFLFRESDILAKFEK.

It belongs to the GroES chaperonin family. Homohexamer.

The protein localises to the mitochondrion matrix. In terms of biological role, eukaryotic CPN10 homolog which is essential for mitochondrial protein biogenesis, together with CPN60. Binds to CPN60 in the presence of Mg-ATP and suppresses the ATPase activity of the latter. The sequence is that of 10 kDa heat shock protein, mitochondrial from Schistosoma japonicum (Blood fluke).